The chain runs to 377 residues: Queuine tRNA-ribosyltransferase (377 aa).

D89 (proton acceptor) is an active-site residue. Substrate is bound by residues 89–93, D143, Q188, and G215; that span reads DSGGF. The tract at residues 246–252 is RNA binding; sequence GVGKPED. D265 functions as the Nucleophile in the catalytic mechanism. The tract at residues 270–274 is RNA binding; important for wobble base 34 recognition; the sequence is TRNAR. Zn(2+)-binding residues include C303, C305, C308, and H334.

It belongs to the queuine tRNA-ribosyltransferase family. Homodimer. Within each dimer, one monomer is responsible for RNA recognition and catalysis, while the other monomer binds to the replacement base PreQ1. Requires Zn(2+) as cofactor.

It carries out the reaction 7-aminomethyl-7-carbaguanine + guanosine(34) in tRNA = 7-aminomethyl-7-carbaguanosine(34) in tRNA + guanine. Its pathway is tRNA modification; tRNA-queuosine biosynthesis. Functionally, catalyzes the base-exchange of a guanine (G) residue with the queuine precursor 7-aminomethyl-7-deazaguanine (PreQ1) at position 34 (anticodon wobble position) in tRNAs with GU(N) anticodons (tRNA-Asp, -Asn, -His and -Tyr). Catalysis occurs through a double-displacement mechanism. The nucleophile active site attacks the C1' of nucleotide 34 to detach the guanine base from the RNA, forming a covalent enzyme-RNA intermediate. The proton acceptor active site deprotonates the incoming PreQ1, allowing a nucleophilic attack on the C1' of the ribose to form the product. After dissociation, two additional enzymatic reactions on the tRNA convert PreQ1 to queuine (Q), resulting in the hypermodified nucleoside queuosine (7-(((4,5-cis-dihydroxy-2-cyclopenten-1-yl)amino)methyl)-7-deazaguanosine). The polypeptide is Queuine tRNA-ribosyltransferase (Acinetobacter baumannii (strain ACICU)).